A 348-amino-acid chain; its full sequence is Ephrin-4 (348 aa).

A signal peptide spans 1 to 20 (MKQFFEFLITTFLLLGLAAA). The 158-residue stretch at 21–178 (DEHIVYWNST…SQNMRLSMKV (158 aa)) folds into the Ephrin RBD domain. Residue Asn28 is glycosylated (N-linked (GlcNAc...) asparagine). 2 disulfides stabilise this stretch: Cys53-Cys91 and Cys79-Cys167. An N-linked (GlcNAc...) asparagine glycan is attached at Asn157. The segment at 207-237 (GGQEDEDSDNDNAHLLPRDLEGSTNPKFRRP) is disordered. Ser329 carries GPI-anchor amidated serine lipidation. Residues 330–348 (STSLSTNFAILLAVIYVLY) constitute a propeptide, removed in mature form.

It belongs to the ephrin family. In terms of assembly, interacts with lat-2. May undergo proteolysis by metalloprotease sup-17 to give rise to a soluble form.

Its subcellular location is the cell membrane. Its function is as follows. Regulates the formation or stabilization of cell-cell contacts at several stages of epithelial morphogenesis. In early embryonic development, involved in ventral closure of the epidermis. During male tail morphogenesis, regulates precursor cell sorting together with mab-20 and allows the formation of distinct sensory rays. Probably acts as a ligand for lad-2 to regulate axon guidance of several neurons including SDQL, SDQR, SMD and PLN neurons during neurogenesis. In Caenorhabditis elegans, this protein is Ephrin-4 (efn-4).